Here is a 494-residue protein sequence, read N- to C-terminus: MIKFALALTLCLAGASLSLAQHNPQWWGNRNTIVHLFEWKWADIAEECEDFLAPRGFAGVQVSPVNENIISPGRPWWERYQPISYKLTTRSGNEEEFADMVRRCNDVGIRIYVDVLLNHMSGDFDGVAVGTAGTEAEPSKKSFPGVPYSAQDFHPSCEITDWNDRYQVQNCELVGLKDLNQHSDYVRSKLIEFLDHLIELGVAGFRVDAAKHMASEDLEYIYDNLSNLNIEHGFPHNARAFIFQEVIDHGHETVSREEYNGLGAVTEFRFSEEIGRAFRGNNALKWLQSWGTGWGFLDSDQALTFVDNHDNQRDQGSVLNYKSPKQYKMATAFHLAYPYGISRVMSSFAFDDHDTPPPQDAQENIISPEFGEDGGCLNGWICEHRWRQIYAMVGFKNAVRDTELSEWWDNGDNQIAFCRGNKGFLAINNNLYDLSQELNTCLPAGEYCDVISGSLIDGACTGKSVRVNERGYGYIHIGADEFDGVLALHVDAKV.

The signal sequence occupies residues 1–20 (MIKFALALTLCLAGASLSLA). Gln-21 is modified (pyrrolidone carboxylic acid). Cys-48 and Cys-104 are oxidised to a cystine. 3 residues coordinate Ca(2+): Asn-118, Gln-169, and Asp-178. Cys-157 and Cys-171 form a disulfide bridge. Arg-206 contributes to the chloride binding site. The Nucleophile role is filled by Asp-208. Position 212 (His-212) interacts with Ca(2+). Glu-245 (proton donor) is an active-site residue. Residues Asn-308 and Arg-343 each coordinate chloride. Intrachain disulfides connect Cys-376/Cys-382, Cys-418/Cys-441, and Cys-448/Cys-460.

Belongs to the glycosyl hydrolase 13 family. As to quaternary structure, monomer. It depends on Ca(2+) as a cofactor. Requires chloride as cofactor.

It is found in the secreted. It carries out the reaction Endohydrolysis of (1-&gt;4)-alpha-D-glucosidic linkages in polysaccharides containing three or more (1-&gt;4)-alpha-linked D-glucose units.. The polypeptide is Alpha-amylase-related protein (Amyrel) (Drosophila auraria (Fruit fly)).